A 142-amino-acid polypeptide reads, in one-letter code: Baculoviral IAP repeat-containing protein 5 (142 aa).

One copy of the BIR repeat lies at Arg-18–Ser-88. Residue Ser-20 is modified to Phosphoserine; by AURKC. Residue Lys-23 is modified to N6-acetyllysine. Phosphothreonine; by CDK1 and CDK15 is present on Thr-34. Residue Thr-48 is modified to Phosphothreonine. Residues Cys-57, Cys-60, His-77, and Cys-84 each coordinate Zn(2+). N6-acetyllysine occurs at positions 90, 110, 112, and 115. Thr-117 bears the Phosphothreonine; by AURKB mark. The residue at position 129 (Lys-129) is an N6-acetyllysine.

Belongs to the IAP family. In terms of assembly, monomer or homodimer. Exists as a homodimer in the apo state and as a monomer in the CPC-bound state. The monomer protects cells against apoptosis more efficiently than the dimer. Only the dimeric form is capable of enhancing tubulin stability in cells. When phosphorylated, interacts with LAMTOR5/HBXIP; the resulting complex binds pro-CASP9, as well as active CASP9, but much less efficiently. Component of the chromosomal passenger complex (CPC) composed of at least BIRC5/survivin, CDCA8/borealin, INCENP, AURKB or AURKC; in the complex forms a triple-helix bundle-based subcomplex with INCENP and CDCA8. Interacts with JTB. Interacts (via BIR domain) with histone H3 phosphorylated at 'Thr-3' (H3pT3). Interacts with EVI5. Interacts with GTP-bound RAN in both the S and M phases of the cell cycle. Interacts with USP9X. Interacts with tubulin. Interacts with BIRC2/c-IAP1. The acetylated form at Lys-129 interacts with STAT3. The monomeric form deacetylated at Lys-129 interacts with XPO1/CRM1. The monomeric form interacts with XIAP/BIRC4. Both the dimeric and monomeric form can interact with DIABLO/SMAC. Interacts with BIRC6/bruce. Interacts with FBXL7; this interaction facilitates the polyubiquitination and subsequent proteasomal degradation of BIRC5 by the SCF(FBXL7) E3 ubiquitin-protein ligase complex. Post-translationally, ubiquitinated by the Cul9-RING ubiquitin-protein ligase complex, leading to its degradation. Ubiquitination is required for centrosomal targeting. Deubiquitinated by USP35 or USP38; leading to stabilization. Acetylation at Lys-129 results in its homodimerization, while deacetylation promotes the formation of monomers which heterodimerize with XPO1/CRM1 which facilitates its nuclear export. The acetylated form represses STAT3 transactivation. The dynamic equilibrium between its acetylation and deacetylation at Lys-129 determines its interaction with XPO1/CRM1, its subsequent subcellular localization, and its ability to inhibit STAT3 transactivation. In terms of processing, in vitro phosphorylation at Thr-117 by AURKB prevents interaction with INCENP and localization to mitotic chromosomes. Phosphorylation at Thr-48 by CK2 is critical for its mitotic and anti-apoptotic activities. Phosphorylation at Thr-34 by CDK15 is critical for its anti-apoptotic activity. Phosphorylation at Ser-20 by AURKC is critical for regulation of proper chromosome alignment and segregation, and possibly cytokinesis.

The protein localises to the cytoplasm. The protein resides in the nucleus. Its subcellular location is the chromosome. It is found in the centromere. It localises to the cytoskeleton. The protein localises to the spindle. The protein resides in the kinetochore. Its subcellular location is the midbody. Its function is as follows. Multitasking protein that has dual roles in promoting cell proliferation and preventing apoptosis. Component of a chromosome passage protein complex (CPC) which is essential for chromosome alignment and segregation during mitosis and cytokinesis. Acts as an important regulator of the localization of this complex; directs CPC movement to different locations from the inner centromere during prometaphase to midbody during cytokinesis and participates in the organization of the center spindle by associating with polymerized microtubules. Involved in the recruitment of CPC to centromeres during early mitosis via association with histone H3 phosphorylated at 'Thr-3' (H3pT3) during mitosis. The complex with RAN plays a role in mitotic spindle formation by serving as a physical scaffold to help deliver the RAN effector molecule TPX2 to microtubules. May counteract a default induction of apoptosis in G2/M phase. The acetylated form represses STAT3 transactivation of target gene promoters. May play a role in neoplasia. Inhibitor of CASP3 and CASP7. Essential for the maintenance of mitochondrial integrity and function. This chain is Baculoviral IAP repeat-containing protein 5 (BIRC5), found in Canis lupus familiaris (Dog).